A 384-amino-acid chain; its full sequence is Alanine racemase (384 aa).

K42 (proton acceptor; specific for D-alanine) is an active-site residue. K42 carries the post-translational modification N6-(pyridoxal phosphate)lysine. Position 140 (R140) interacts with substrate. The Proton acceptor; specific for L-alanine role is filled by Y271. M319 contacts substrate.

This sequence belongs to the alanine racemase family. As to quaternary structure, homodimer. Pyridoxal 5'-phosphate serves as cofactor.

It catalyses the reaction L-alanine = D-alanine. The protein operates within amino-acid biosynthesis; D-alanine biosynthesis; D-alanine from L-alanine: step 1/1. Its function is as follows. Catalyzes the interconversion of L-alanine and D-alanine. The protein is Alanine racemase (alr) of Mycobacterium tuberculosis (strain CDC 1551 / Oshkosh).